We begin with the raw amino-acid sequence, 463 residues long: SPARC-related modular calcium-binding protein 1 (463 aa).

Positions 1-25 (MLPARVRLLTPHLLLVLVQLSPAGG) are cleaved as a signal peptide. Residues 36–88 (SDRDPPCNPHCPRTQPKPICASDGRSYESMCEYQRAKCRDPALAVVHRGRCKD) form the Kazal-like domain. 6 disulfide bridges follow: Cys42/Cys73, Cys46/Cys66, Cys55/Cys86, Cys94/Cys117, Cys128/Cys135, and Cys137/Cys157. A Thyroglobulin type-1 1 domain is found at 91 to 157 (QSKCRLERAQ…SSVQNKTPVC (67 aa)). Asn224 carries N-linked (GlcNAc...) asparagine glycosylation. Residues 234–302 (VHSCDQERQS…TSTRYVMPSC (69 aa)) enclose the Thyroglobulin type-1 2 domain. Disulfide bonds link Cys237–Cys261, Cys272–Cys279, and Cys281–Cys302. EF-hand domains are found at residues 369-404 (LEER…VKKK) and 406-441 (KPKK…SKEG). The Ca(2+) site is built by Asp382, Asn384, Ser386, Asp388, Glu393, Asp419, Asn421, Asp423, and Glu430. Residue Asn384 is glycosylated (N-linked (GlcNAc...) asparagine).

Post-translationally, glycosylated. In terms of tissue distribution, widely expressed in many tissues with a strongest signal in ovary.

Its subcellular location is the secreted. The protein localises to the extracellular space. It localises to the extracellular matrix. The protein resides in the basement membrane. Its function is as follows. Probable regulator of osteoblast differentiation. Plays essential roles in both eye and limb development. This chain is SPARC-related modular calcium-binding protein 1 (Smoc1), found in Mus musculus (Mouse).